Consider the following 829-residue polypeptide: Periplasmic nitrate reductase (829 aa).

Residues 1–31 constitute a signal peptide (tat-type signal); that stretch reads MKLSRRDFMKANAVAAAAAAAGLTIPTVARA. A 4Fe-4S Mo/W bis-MGD-type domain is found at 40–96; sequence ITWDKAPCRFCGTGCGVLVGTQNGRIVASQGDPDAPVNRGLNCIKGYFLPKIMYGKD. Residues Cys47, Cys50, Cys54, and Cys82 each coordinate [4Fe-4S] cluster. Mo-bis(molybdopterin guanine dinucleotide)-binding positions include Lys84, Gln151, Asn176, Cys180, 213–220, 263–265, Met373, Gln377, Asn483, 509–510, Lys532, Asp559, and 719–728; these read WGSNMAEM, QSD, SD, and TGRVLEHWHT. Phe795 is a substrate binding site. Mo-bis(molybdopterin guanine dinucleotide)-binding residues include Asn803 and Lys820.

The protein belongs to the prokaryotic molybdopterin-containing oxidoreductase family. NasA/NapA/NarB subfamily. Component of the periplasmic nitrate reductase NapAB complex composed of NapA and NapB. [4Fe-4S] cluster is required as a cofactor. Mo-bis(molybdopterin guanine dinucleotide) serves as cofactor. Post-translationally, predicted to be exported by the Tat system. The position of the signal peptide cleavage has not been experimentally proven.

The protein localises to the periplasm. The catalysed reaction is 2 Fe(II)-[cytochrome] + nitrate + 2 H(+) = 2 Fe(III)-[cytochrome] + nitrite + H2O. Functionally, catalytic subunit of the periplasmic nitrate reductase complex NapAB. Receives electrons from NapB and catalyzes the reduction of nitrate to nitrite. This Edwardsiella ictaluri (strain 93-146) protein is Periplasmic nitrate reductase.